The following is a 147-amino-acid chain: Acidic phospholipase A2 S9-53F (147 aa).

An N-terminal signal peptide occupies residues 1–19 (MYPAHLLVLLAVCVSLLGA). Positions 20-27 (SDIPPQPL) are excised as a propeptide. 7 disulfide bridges follow: Cys-38–Cys-99, Cys-54–Cys-146, Cys-56–Cys-72, Cys-71–Cys-127, Cys-78–Cys-120, Cys-88–Cys-113, and Cys-106–Cys-118. Positions 55, 57, and 59 each coordinate Ca(2+). Residue His-75 is part of the active site. Ca(2+) is bound at residue Asp-76. Asp-121 is a catalytic residue.

The protein belongs to the phospholipase A2 family. Group I subfamily. D49 sub-subfamily. Ca(2+) is required as a cofactor. Expressed by the venom gland.

It localises to the secreted. It carries out the reaction a 1,2-diacyl-sn-glycero-3-phosphocholine + H2O = a 1-acyl-sn-glycero-3-phosphocholine + a fatty acid + H(+). Snake venom phospholipase A2 (PLA2) that inhibits collagen-induced platelet aggregation. PLA2 catalyzes the calcium-dependent hydrolysis of the 2-acyl groups in 3-sn-phosphoglycerides. This chain is Acidic phospholipase A2 S9-53F, found in Austrelaps superbus (Lowland copperhead snake).